A 508-amino-acid chain; its full sequence is Photosystem II CP47 reaction center protein (508 aa).

The next 6 membrane-spanning stretches (helical) occupy residues 21 to 36 (SVHI…WAGS), 101 to 115 (IVFS…IWHW), 140 to 156 (GIHL…FGAF), 203 to 218 (IAAG…FHLS), 237 to 252 (VLSS…AFVV), and 457 to 472 (SFAL…HGAR).

It belongs to the PsbB/PsbC family. PsbB subfamily. In terms of assembly, PSII is composed of 1 copy each of membrane proteins PsbA, PsbB, PsbC, PsbD, PsbE, PsbF, PsbH, PsbI, PsbJ, PsbK, PsbL, PsbM, PsbT, PsbX, PsbY, PsbZ, Psb30/Ycf12, at least 3 peripheral proteins of the oxygen-evolving complex and a large number of cofactors. It forms dimeric complexes. Binds multiple chlorophylls. PSII binds additional chlorophylls, carotenoids and specific lipids. serves as cofactor.

It localises to the plastid. Its subcellular location is the chloroplast thylakoid membrane. One of the components of the core complex of photosystem II (PSII). It binds chlorophyll and helps catalyze the primary light-induced photochemical processes of PSII. PSII is a light-driven water:plastoquinone oxidoreductase, using light energy to abstract electrons from H(2)O, generating O(2) and a proton gradient subsequently used for ATP formation. The sequence is that of Photosystem II CP47 reaction center protein from Illicium oligandrum (Star anise).